The chain runs to 191 residues: Elongation factor P-like protein (191 aa).

The protein belongs to the elongation factor P family.

The sequence is that of Elongation factor P-like protein from Photobacterium profundum (strain SS9).